Here is a 97-residue protein sequence, read N- to C-terminus: Serine protease inhibitor Kazal-type 8 (97 aa).

The signal sequence occupies residues 1 to 21 (MKGICSDAILVLATSMWMAFA). In terms of domain architecture, Kazal-like spans 36-96 (DKTIVECLKN…TKLYDGQCEN (61 aa)). 3 cysteine pairs are disulfide-bonded: Cys-42-Cys-76, Cys-49-Cys-73, and Cys-62-Cys-94. Asn-85 carries N-linked (GlcNAc...) asparagine glycosylation.

Its subcellular location is the secreted. In terms of biological role, probable serine protease inhibitor. The protein is Serine protease inhibitor Kazal-type 8 (SPINK8) of Homo sapiens (Human).